Consider the following 2236-residue polypeptide: uncharacterized protein (2236 aa).

2 Spectrin repeats span residues 46 to 146 (QVYL…RQLE) and 238 to 335 (QKFV…TDIE). 2 coiled-coil regions span residues 496–541 (VVEQ…TVNS) and 603–631 (DDQQKNMANEELRKTYENLKKIEMEVGRQ). 5 Spectrin repeats span residues 839-949 (YEYD…KTLK), 1048-1146 (KKLE…KRME), 1261-1361 (LGAE…VDLN), 1367-1459 (ILID…KSLA), and 1562-1667 (QKVV…NRLE). The stretch at 1835-1869 (QNSTDAEKKLSLVSERLNALKKQLDLLAEKIAVDD) forms a coiled coil. 2 EF-hand domains span residues 2104–2139 (KQLHEFELAFDYFDRERNGWLDYKHFELCLKSQGYN) and 2141–2176 (SAENTLKETMTLLDPSTTGHIQKHDYVRYMVKHETT). Residues Asp2154, Ser2156, Thr2158, His2160, and Asp2165 each coordinate Ca(2+).

This sequence belongs to the spectrin family.

This is an uncharacterized protein from Caenorhabditis elegans.